Consider the following 294-residue polypeptide: ATP phosphoribosyltransferase (294 aa).

This sequence belongs to the ATP phosphoribosyltransferase family. Long subfamily. Mg(2+) is required as a cofactor.

It is found in the cytoplasm. It catalyses the reaction 1-(5-phospho-beta-D-ribosyl)-ATP + diphosphate = 5-phospho-alpha-D-ribose 1-diphosphate + ATP. It participates in amino-acid biosynthesis; L-histidine biosynthesis; L-histidine from 5-phospho-alpha-D-ribose 1-diphosphate: step 1/9. Feedback inhibited by histidine. Catalyzes the condensation of ATP and 5-phosphoribose 1-diphosphate to form N'-(5'-phosphoribosyl)-ATP (PR-ATP). Has a crucial role in the pathway because the rate of histidine biosynthesis seems to be controlled primarily by regulation of HisG enzymatic activity. This chain is ATP phosphoribosyltransferase, found in Maricaulis maris (strain MCS10) (Caulobacter maris).